Reading from the N-terminus, the 477-residue chain is Exodeoxyribonuclease 7 large subunit (477 aa).

A disordered region spans residues 452–477; it reads KAAAAPKRVKKSPPPGTSGAQEDLFG.

This sequence belongs to the XseA family. Heterooligomer composed of large and small subunits.

Its subcellular location is the cytoplasm. The enzyme catalyses Exonucleolytic cleavage in either 5'- to 3'- or 3'- to 5'-direction to yield nucleoside 5'-phosphates.. Bidirectionally degrades single-stranded DNA into large acid-insoluble oligonucleotides, which are then degraded further into small acid-soluble oligonucleotides. This is Exodeoxyribonuclease 7 large subunit from Erythrobacter litoralis (strain HTCC2594).